The following is a 519-amino-acid chain: Cytosol aminopeptidase (519 aa).

Lys45 is modified (N6-succinyllysine). At Ser54 the chain carries Phosphoserine. N6-succinyllysine occurs at positions 61 and 103. Residues Ser180 and Ser194 each carry the phosphoserine modification. Zn(2+) contacts are provided by Leu202 and Met203. Lys221 carries the N6-acetyllysine; alternate modification. Position 221 is an N6-succinyllysine; alternate (Lys221). Ser238 carries the phosphoserine modification. Residues Lys282 and Asp287 each coordinate Zn(2+). Substrate is bound by residues Lys282, Asp287, Ser292, and Lys294. Mg(2+) is bound at residue Asp287. Lys294 is an active-site residue. Zn(2+) contacts are provided by Arg303, Asp305, Asp364, and Glu366. Residues Asp305 and Asp364 each contribute to the substrate site. Mg(2+)-binding residues include Asp364 and Glu366. The active site involves Arg368. An N6-acetyllysine; alternate modification is found at Lys455. The residue at position 455 (Lys455) is an N6-succinyllysine; alternate. Residue Lys476 is modified to N6-succinyllysine. Lys489 carries the N6-acetyllysine; alternate modification. At Lys489 the chain carries N6-succinyllysine; alternate.

This sequence belongs to the peptidase M17 family. As to quaternary structure, homohexamer. Requires Zn(2+) as cofactor. The cofactor is Mn(2+).

Its subcellular location is the cytoplasm. It catalyses the reaction Release of an N-terminal amino acid, Xaa-|-Yaa-, in which Xaa is preferably Leu, but may be other amino acids including Pro although not Arg or Lys, and Yaa may be Pro. Amino acid amides and methyl esters are also readily hydrolyzed, but rates on arylamides are exceedingly low.. The enzyme catalyses an S-substituted L-cysteinylglycine + H2O = an S-substituted L-cysteine + glycine. The catalysed reaction is L-cysteinylglycine + H2O = L-cysteine + glycine. It carries out the reaction S-benzyl-L-cysteinylglycine + H2O = S-benzyl-L-cysteine + glycine. It catalyses the reaction Release of N-terminal proline from a peptide.. Its function is as follows. Cytosolic metallopeptidase that catalyzes the removal of unsubstituted N-terminal hydrophobic amino acids from various peptides. The presence of Zn(2+) ions is essential for the peptidase activity, and the association with other cofactors can modulate the substrate spectificity of the enzyme. For instance, in the presence of Mn(2+), it displays a specific Cys-Gly hydrolyzing activity of Cys-Gly-S-conjugates. Involved in the metabolism of glutathione and in the degradation of glutathione S-conjugates, which may play a role in the control of the cell redox status. The sequence is that of Cytosol aminopeptidase from Mus musculus (Mouse).